The sequence spans 160 residues: Large ribosomal subunit protein bL17 (160 aa).

The disordered stretch occupies residues 128 to 160 (KKATKTRRSRKRKSADVVVEAAPAEETPKAAEE). A compositionally biased stretch (basic residues) spans 129–140 (KATKTRRSRKRK).

The protein belongs to the bacterial ribosomal protein bL17 family. As to quaternary structure, part of the 50S ribosomal subunit. Contacts protein L32.

The protein is Large ribosomal subunit protein bL17 of Porphyromonas gingivalis (strain ATCC 33277 / DSM 20709 / CIP 103683 / JCM 12257 / NCTC 11834 / 2561).